A 264-amino-acid chain; its full sequence is Claudin-18 (264 aa).

The Cytoplasmic portion of the chain corresponds to 1-6; sequence MATTTC. A helical transmembrane segment spans residues 7 to 27; the sequence is QVVGLLLSLLGLAGCIAATGM. The Extracellular segment spans residues 28-80; that stretch reads DMWSTQDLYDNPVTAVFQYEGLWRSCVQQSSGFTECRPYFTILGLPAMLQAVR. A helical membrane pass occupies residues 81–101; sequence ALMIVGIVLGVIGILVSIFAL. Topologically, residues 102–122 are cytoplasmic; sequence KCIRIGSMDDSAKAKMTLTSG. The helical transmembrane segment at 123 to 143 threads the bilayer; sequence ILFIISGICAIIGVSVFANML. The Extracellular segment spans residues 144–176; it reads VTNFWMSTANMYSGMGGMGGMVQTVQTRYTFGA. The chain crosses the membrane as a helical span at residues 177-197; sequence ALFVGWVAGGLTLIGGVMMCI. Topologically, residues 198–264 are cytoplasmic; it reads ACRGLTPDDS…QSHPTKYDYV (67 aa). The required for role in regulation of RANKL-induced osteoclast differentiation stretch occupies residues 198 to 264; it reads ACRGLTPDDS…QSHPTKYDYV (67 aa). The residue at position 217 (Ser-217) is a Phosphoserine. The segment at 241–264 is disordered; it reads KKIYDGGARTEDDEQSHPTKYDYV. Over residues 242–264 the composition is skewed to basic and acidic residues; that stretch reads KIYDGGARTEDDEQSHPTKYDYV.

This sequence belongs to the claudin family. In terms of assembly, interacts with TJP2/ZO-2. Interacts with TJP1/ZO-1. Interacts with YAP1 (phosphorylated); the interaction sequesters YAP1 away from the nucleus and thereby restricts transcription of YAP1 target genes. As to quaternary structure, interacts with CLDN19. Expressed in the lung (at protein level). As to expression, expressed in lung. Expressed in the stomach. In terms of tissue distribution, expressed in lung. Expressed in stomach. Expressed in bone. As to expression, expressed in stomach.

Its subcellular location is the cell junction. The protein resides in the tight junction. It localises to the cell membrane. The protein localises to the lateral cell membrane. Involved in alveolar fluid homeostasis via regulation of alveolar epithelial tight junction composition and therefore ion transport and solute permeability, potentially via downstream regulation of the actin cytoskeleton organization and beta-2-adrenergic signaling. Required for lung alveolarization and maintenance of the paracellular alveolar epithelial barrier. Acts to maintain epithelial progenitor cell proliferation and organ size, via regulation of YAP1 localization away from the nucleus and thereby restriction of YAP1 target gene transcription. Acts as a negative regulator of RANKL-induced osteoclast differentiation, potentially via relocation of TJP2/ZO-2 away from the nucleus, subsequently involved in bone resorption in response to calcium deficiency. Mediates the osteoprotective effects of estrogen, potentially via acting downstream of estrogen signaling independently of RANKL signaling pathways. Functionally, involved in the maintenance of homeostasis of the alveolar microenvironment via regulation of pH and subsequent T-cell activation in the alveolar space, is therefore indirectly involved in limiting C.neoformans infection. In terms of biological role, required for the formation of the gastric paracellular barrier via its role in tight junction formation, thereby involved in the response to gastric acidification. The sequence is that of Claudin-18 (Cldn18) from Mus musculus (Mouse).